The following is a 186-amino-acid chain: MIRGLFVGRFQPVHKGHIKALEFVFSQVDEVIIGIGSAQASHTLKNPFTTGERMEMLIRALEEAGFDKRYYLIPLPDINFNAIWVPYVESMVPRFHVVFTGNSLVAQLFKERGYKVVVQPMFKKDILSATEIRRRMIAGEPWEDLVPKSVVEYIKEIKGVERLRNLATNLESSEKELQAPIRVPEY.

It belongs to the archaeal NMN adenylyltransferase family.

It localises to the cytoplasm. The enzyme catalyses beta-nicotinamide D-ribonucleotide + ATP + H(+) = diphosphate + NAD(+). It functions in the pathway cofactor biosynthesis; NAD(+) biosynthesis; NAD(+) from nicotinamide D-ribonucleotide: step 1/1. The chain is Nicotinamide-nucleotide adenylyltransferase from Pyrococcus horikoshii (strain ATCC 700860 / DSM 12428 / JCM 9974 / NBRC 100139 / OT-3).